The sequence spans 258 residues: Putative cysteine-rich repeat secretory protein 61 (258 aa).

An N-terminal signal peptide occupies residues 1–31; it reads MSSSFIPKRIALVLNLAMVAIQVFFIRSVSS. Gnk2-homologous domains lie at 38-140 and 146-253; these read YLYH…PTAF and DKNK…IYPF.

This sequence belongs to the cysteine-rich repeat secretory protein family.

It localises to the secreted. This chain is Putative cysteine-rich repeat secretory protein 61 (CRRSP61), found in Arabidopsis thaliana (Mouse-ear cress).